Reading from the N-terminus, the 506-residue chain is Xaa-Pro aminopeptidase 3 (506 aa).

The transit peptide at 1-31 (MLSLLSTPRLVPVIARLRGLSGCMSCLQRRY) directs the protein to the mitochondrion. The interaction with TNFRSF1B stretch occupies residues 54–79 (HPHLLRPGEVTPGLSQVEYALRRHKL). Substrate is bound by residues Tyr300, Asp331, Asp342, His423, His430, Glu450, and Glu474. Mn(2+) is bound by residues Asp331, Asp342, and His423. Glu450 and Glu474 together coordinate Mn(2+).

This sequence belongs to the peptidase M24B family. As to quaternary structure, homodimer. Interacts with TNFRSF1B/TNFR2 (activated) and TRAF2. Mn(2+) serves as cofactor. As to expression, expressed in the kidney, specifically in intercalated cells, but not in principal cells, of the distal convoluted tubule and cortical collecting duct (at protein level).

It localises to the mitochondrion. The protein resides in the cytoplasm. The enzyme catalyses Release of any N-terminal amino acid, including proline, that is linked to proline, even from a dipeptide or tripeptide.. Its function is as follows. Catalyzes the removal of a penultimate prolyl residue from the N-termini of peptides, such as Leu-Pro-Ala. Also shows low activity towards peptides with Ala or Ser at the P1 position. Promotes TNFRSF1B-mediated phosphorylation of MAPK8/JNK1 and MAPK9/JNK2, suggesting a function as an adapter protein for TNFRSF1B; the effect is independent of XPNPEP3 peptidase activity. May inhibit apoptotic cell death induced via TNF-TNFRSF1B signaling. The polypeptide is Xaa-Pro aminopeptidase 3 (Xpnpep3) (Rattus norvegicus (Rat)).